The sequence spans 327 residues: MAYISSLDILETEIAIKKVKDFFESHLSKELDLLRVSAPLFVIPESGLNDNLNGTERPVSFDTKSGERVEIVHSLAKWKRMALYRYNIENDKGIYTDMNAIRRDEDTDFIHSYYVDQWDWEKIISKEDRNEEYLKDVVRKIYSVFKKTEEYITTEYPKLTKKLPEEITFITAQELENKYPNLTPKNREHAAAKEYGAIFLMKIGGKLSSGEKHDGRAPDYDDWDLNGDIIFNYPLLGIGLELSSMGIRVDEKSLDEQLKIANCEDRRSLPYHQMILNKVLPYTIGGGIGQSRICMFFLDKLHIGEVQASIWSQEVHEICRQMNIKLL.

This sequence belongs to the class-II aminoacyl-tRNA synthetase family. AsnA subfamily.

Its subcellular location is the cytoplasm. The catalysed reaction is L-aspartate + NH4(+) + ATP = L-asparagine + AMP + diphosphate + H(+). The protein operates within amino-acid biosynthesis; L-asparagine biosynthesis; L-asparagine from L-aspartate (ammonia route): step 1/1. In Fusobacterium nucleatum subsp. nucleatum (strain ATCC 25586 / DSM 15643 / BCRC 10681 / CIP 101130 / JCM 8532 / KCTC 2640 / LMG 13131 / VPI 4355), this protein is Aspartate--ammonia ligase.